A 185-amino-acid polypeptide reads, in one-letter code: MISDIRKDAEIRMEKCVEAFKNQISKIRTGRASPSLLDGIVVEYYGTPTPLRQLASVTVEDSRTLKINVFDRSMSAAVEKAIMASDLGLNPSSAGSDIRVPLPPLTEERRKDLTKIVRGEAEQARVAVRNVRRDANDKVKALLKEKEISEDDDRRSQDDVQKMTDAAIKKVDAALADKEAELMQF.

Belongs to the RRF family.

The protein resides in the cytoplasm. Its function is as follows. Responsible for the release of ribosomes from messenger RNA at the termination of protein biosynthesis. May increase the efficiency of translation by recycling ribosomes from one round of translation to another. The chain is Ribosome-recycling factor from Klebsiella pneumoniae (strain 342).